A 662-amino-acid chain; its full sequence is A-kinase anchor protein 10, mitochondrial (662 aa).

The N-terminal 28 residues, 1-28, are a transit peptide targeting the mitochondrion; it reads MRGAGPSPRHSPRALRPDPGPAMSFFRR. Disordered stretches follow at residues 1–55, 178–205, and 242–280; these read MRGA…SPQK, KQSS…ALDR, and GHSA…NSCS. A compositionally biased stretch (basic and acidic residues) spans 32–43; sequence GKEQEKTLDVKS. Residues S52 and S189 each carry the phosphoserine modification. RGS domains are found at residues 125 to 369 and 379 to 505; these read TLEQ…CKYQ and YLAD…YKYL. Over residues 256-280 the composition is skewed to polar residues; the sequence is GSHQIPTDSQDSSSRLAVGSRNSCS. Residue S281 is modified to Phosphoserine. Positions 634–647 are PKA-RII subunit binding; that stretch reads LAWKIAKMIVSDVM.

As to expression, highly expressed in testis, kidney and lung, followed by brain, skeletal muscle, liver, spleen and heart. Also expressed in brown adipose tissue and pancreas.

It is found in the mitochondrion. Its subcellular location is the membrane. It localises to the cytoplasm. Differentially targeted protein that binds to type I and II regulatory subunits of protein kinase A and anchors them to the mitochondria or the plasma membrane. Although the physiological relevance between PKA and AKAPS with mitochondria is not fully understood, one idea is that BAD, a proapoptotic member, is phosphorylated and inactivated by mitochondria-anchored PKA. It cannot be excluded too that it may facilitate PKA as well as G protein signal transduction, by acting as an adapter for assembling multiprotein complexes. With its RGS domain, it could lead to the interaction to G-alpha proteins, providing a link between the signaling machinery and the downstream kinase. The polypeptide is A-kinase anchor protein 10, mitochondrial (Akap10) (Mus musculus (Mouse)).